The following is a 492-amino-acid chain: Membrane-bound glycerophospholipid O-acyltransferase 1 (492 aa).

6 helical membrane-spanning segments follow: residues 33 to 53, 69 to 89, 125 to 145, 179 to 199, 237 to 257, and 296 to 316; these read VNFV…RIYL, ILGI…LFVL, IYIF…MIVT, PSLL…AGPC, MGAV…FLTL, and YFAW…FNGM. Residues Asn-349 and His-380 contribute to the active site. 3 helical membrane passes run 370 to 390, 423 to 443, and 452 to 472; these read VLTF…YFTF, VVTW…FVML, and YKSV…FLPI. The residue at position 486 (Ser-486) is a Phosphoserine.

This sequence belongs to the membrane-bound acyltransferase family. As to expression, highly expressed in stomach, epididymis, and colon.

The protein resides in the endoplasmic reticulum membrane. It catalyses the reaction a 1-acyl-sn-glycero-3-phosphoethanolamine + an acyl-CoA = a 1,2-diacyl-sn-glycero-3-phosphoethanolamine + CoA. The catalysed reaction is a 1-acyl-sn-glycero-3-phospho-L-serine + an acyl-CoA = a 1,2-diacyl-sn-glycero-3-phospho-L-serine + CoA. The enzyme catalyses a 1-acyl-sn-glycero-3-phosphocholine + an acyl-CoA = a 1,2-diacyl-sn-glycero-3-phosphocholine + CoA. It carries out the reaction a 1-O-(1Z-alkenyl)-sn-glycero-3-phosphoethanolamine + (9Z)-octadecenoyl-CoA = 1-O-(1Z)-alkenyl-2-(9Z)-octadecenoyl-sn-glycero-3-phosphoethanolamine + CoA. It catalyses the reaction 1-octadecanoyl-sn-glycero-3-phosphoethanolamine + (9Z)-octadecenoyl-CoA = 1-octadecanoyl-2-(9Z-octadecenoyl)-sn-glycero-3-phosphoethanolamine + CoA. The catalysed reaction is 1-(9Z-octadecenoyl)-sn-glycero-3-phospho-L-serine + (9Z)-octadecenoyl-CoA = 1,2-di-(9Z)-octadecenoyl-sn-glycero-3-phospho-L-serine + CoA. The enzyme catalyses 1-(9Z-octadecenoyl)-sn-glycero-3-phosphoethanolamine + (9Z)-octadecenoyl-CoA = 1,2-di-(9Z-octadecenoyl)-sn-glycero-3-phosphoethanolamine + CoA. It carries out the reaction 1-hexadecanoyl-sn-glycero-3-phosphoethanolamine + (9Z)-octadecenoyl-CoA = 1-hexadecanoyl-2-(9Z-octadecenoyl)-sn-glycero-3-phosphoethanolamine + CoA. It catalyses the reaction 1-(10Z-heptadecenoyl)-sn-glycero-3-phosphoethanolamine + hexadecanoyl-CoA = 1-(10Z-heptadecenoyl)-2-hexadecanoyl-sn-glycero-3-phosphoethanolamine + CoA. The catalysed reaction is 1-(9Z-octadecenoyl)-sn-glycero-3-phospho-L-serine + octadecanoyl-CoA = 1-(9Z-octadecenoyl)-2-octadecanoyl-sn-glycero-3-phospho-L-serine + CoA. The enzyme catalyses 1-(9Z-octadecenoyl)-sn-glycero-3-phospho-L-serine + (9Z)-hexadecenoyl-CoA = 1-(9Z-octadecenoyl)-2-(9Z-hexadecenoyl)-sn-glycero-3-phospho-L-serine + CoA. It carries out the reaction 1-(9Z-octadecenoyl)-sn-glycero-3-phospho-L-serine + (9Z,12Z)-octadecadienoyl-CoA = 1-(9Z-octadecenoyl)-2-(9Z,12Z-octadienoyl)-sn-glycero-3-phospho-L-serine + CoA. It catalyses the reaction 1-hexadecanoyl-sn-glycero-3-phosphocholine + (9Z)-octadecenoyl-CoA = 1-hexadecanoyl-2-(9Z-octadecenoyl)-sn-glycero-3-phosphocholine + CoA. The catalysed reaction is 1-(10Z-heptadecenoyl)-sn-glycero-3-phosphoethanolamine + (9Z)-octadecenoyl-CoA = 1-(10Z-heptadecenoyl)-2-(9Z-octadecenoyl)-sn-glycero-3-phosphoethanolamine + CoA. Its pathway is lipid metabolism; phospholipid metabolism. Acyltransferase which catalyzes the transfer of an acyl group from an acyl-CoA towards a lysophospholipid producing a phospholipid and participates in the reacylation step of the phospholipid remodeling pathway also known as the Lands cycle. Acts on lysophosphatidylserine (1-acyl-2-hydroxy-sn-glycero-3-phospho-L-serine or LPS) and lysophosphatidylethanolamine (1-acyl-sn-glycero-3-phosphoethanolamine or LPE), and to a lesser extend lysophosphatidylcholine. Prefers oleoyl-CoA as the acyl donor and 1-oleoyl-LPE as acceptor. May play a role in neurite outgrowth during neuronal differentiation. The chain is Membrane-bound glycerophospholipid O-acyltransferase 1 from Mus musculus (Mouse).